The primary structure comprises 2038 residues: HEAT repeat-containing protein 5A (2038 aa).

HEAT repeat units lie at residues 850-887 (EVRRLVLTLVLGALESPTPLLRCAASEAWARLAQVADD) and 1082-1119 (LLRRAVLACLRQLVQREAAEVSEHAIMLARDGRDAAAD). Positions 1646-1668 (RSAEVDDGASEKETLPEFGEGKD) are disordered. Residue serine 1647 is modified to Phosphoserine.

The protein belongs to the HEATR5 family.

The chain is HEAT repeat-containing protein 5A (Heatr5a) from Mus musculus (Mouse).